Consider the following 149-residue polypeptide: MAERLSEEQIAEFKEAFSLFDRDGDGCITTMELGTVMRSLGQNPTEAELQDMVGEVDADGSGTIDFPEFLSLMARKMRDSDSEEEIREAFRVFDKDGNGYISAAELRHVMTNLGEKLTDEEVDEMIKEADCNNDGQVNYEEFVRMMTEK.

EF-hand domains are found at residues 8 to 43, 44 to 79, 81 to 116, and 117 to 149; these read EQIA…LGQN, PTEA…KMRD, DSEE…LGEK, and LTDE…MTEK. Aspartate 21, aspartate 23, aspartate 25, cysteine 27, glutamate 32, aspartate 57, aspartate 59, serine 61, threonine 63, glutamate 68, aspartate 94, aspartate 96, asparagine 98, tyrosine 100, and glutamate 105 together coordinate Ca(2+). The residue at position 116 (lysine 116) is an N6,N6,N6-trimethyllysine. Positions 130, 132, 134, 136, and 141 each coordinate Ca(2+).

Belongs to the calmodulin family.

The polypeptide is Calmodulin, striated muscle (CCM1) (Gallus gallus (Chicken)).